A 179-amino-acid chain; its full sequence is Warthog protein 3 (179 aa).

Positions methionine 1–alanine 19 are cleaved as a signal peptide. Residues asparagine 52 and asparagine 147 are each glycosylated (N-linked (GlcNAc...) asparagine).

Expressed in the trinucleate pharyngeal gland cell g1, seam cells and hypodermis.

It is found in the secreted. Intercellular signal essential for a variety of patterning events during development. The polypeptide is Warthog protein 3 (wrt-3) (Caenorhabditis elegans).